We begin with the raw amino-acid sequence, 511 residues long: UDP-N-acetylhexosamine pyrophosphorylase-like protein 1 (511 aa).

Residues 1–19 (MDRSESAESAESRRRRAEE) are compositionally biased toward basic and acidic residues. The interval 1 to 22 (MDRSESAESAESRRRRAEESGQ) is disordered. A Substrate binding motif is present at residues 117–120 (LAGG). Residues 117–120 (LAGG), lysine 131, glutamine 205, and glycine 231 each bind UTP. Residue asparagine 232 coordinates substrate. Residue aspartate 262 coordinates UTP. The short motif at 312 to 313 (EY) is the Substrate binding element. Lysine 386 contacts UTP. Position 416 (lysine 416) interacts with substrate.

The protein belongs to the UDPGP type 1 family.

The polypeptide is UDP-N-acetylhexosamine pyrophosphorylase-like protein 1 (uap1l1) (Xenopus tropicalis (Western clawed frog)).